The following is a 319-amino-acid chain: Ribonuclease Z (319 aa).

Residues His62, His64, Asp66, His67, His145, Asp215, and His273 each coordinate Zn(2+). The Proton acceptor role is filled by Asp66.

The protein belongs to the RNase Z family. In terms of assembly, homodimer. Zn(2+) serves as cofactor.

The catalysed reaction is Endonucleolytic cleavage of RNA, removing extra 3' nucleotides from tRNA precursor, generating 3' termini of tRNAs. A 3'-hydroxy group is left at the tRNA terminus and a 5'-phosphoryl group is left at the trailer molecule.. Functionally, zinc phosphodiesterase, which displays some tRNA 3'-processing endonuclease activity. Probably involved in tRNA maturation, by removing a 3'-trailer from precursor tRNA. The protein is Ribonuclease Z of Borrelia recurrentis (strain A1).